The primary structure comprises 1080 residues: Isoleucine--tRNA ligase (1080 aa).

The short motif at 48–58 (PYASGSIHLGT) is the 'HIGH' region element. The 'KMSKS' region signature appears at 628–632 (KMSKS). Residue lysine 631 coordinates ATP.

The protein belongs to the class-I aminoacyl-tRNA synthetase family. IleS type 2 subfamily. Monomer. The cofactor is Zn(2+).

It localises to the cytoplasm. The enzyme catalyses tRNA(Ile) + L-isoleucine + ATP = L-isoleucyl-tRNA(Ile) + AMP + diphosphate. Its function is as follows. Catalyzes the attachment of isoleucine to tRNA(Ile). As IleRS can inadvertently accommodate and process structurally similar amino acids such as valine, to avoid such errors it has two additional distinct tRNA(Ile)-dependent editing activities. One activity is designated as 'pretransfer' editing and involves the hydrolysis of activated Val-AMP. The other activity is designated 'posttransfer' editing and involves deacylation of mischarged Val-tRNA(Ile). This chain is Isoleucine--tRNA ligase, found in Methanopyrus kandleri (strain AV19 / DSM 6324 / JCM 9639 / NBRC 100938).